We begin with the raw amino-acid sequence, 416 residues long: Gamma-glutamyl phosphate reductase (416 aa).

It belongs to the gamma-glutamyl phosphate reductase family.

The protein resides in the cytoplasm. It catalyses the reaction L-glutamate 5-semialdehyde + phosphate + NADP(+) = L-glutamyl 5-phosphate + NADPH + H(+). The protein operates within amino-acid biosynthesis; L-proline biosynthesis; L-glutamate 5-semialdehyde from L-glutamate: step 2/2. Functionally, catalyzes the NADPH-dependent reduction of L-glutamate 5-phosphate into L-glutamate 5-semialdehyde and phosphate. The product spontaneously undergoes cyclization to form 1-pyrroline-5-carboxylate. This Streptococcus thermophilus (strain ATCC BAA-491 / LMD-9) protein is Gamma-glutamyl phosphate reductase.